A 299-amino-acid polypeptide reads, in one-letter code: Formamidopyrimidine-DNA glycosylase (299 aa).

Pro2 acts as the Schiff-base intermediate with DNA in catalysis. Glu3 serves as the catalytic Proton donor. Lys58 serves as the catalytic Proton donor; for beta-elimination activity. DNA-binding residues include His106, Arg125, and Lys168. The FPG-type zinc-finger motif lies at 259-295; the sequence is RVYDRVGHACPTKGCTGRVGRIVQGGRSTFFCETCQV. The Proton donor; for delta-elimination activity role is filled by Arg285.

This sequence belongs to the FPG family. As to quaternary structure, monomer. Requires Zn(2+) as cofactor.

The enzyme catalyses Hydrolysis of DNA containing ring-opened 7-methylguanine residues, releasing 2,6-diamino-4-hydroxy-5-(N-methyl)formamidopyrimidine.. The catalysed reaction is 2'-deoxyribonucleotide-(2'-deoxyribose 5'-phosphate)-2'-deoxyribonucleotide-DNA = a 3'-end 2'-deoxyribonucleotide-(2,3-dehydro-2,3-deoxyribose 5'-phosphate)-DNA + a 5'-end 5'-phospho-2'-deoxyribonucleoside-DNA + H(+). Its function is as follows. Involved in base excision repair of DNA damaged by oxidation or by mutagenic agents. Acts as a DNA glycosylase that recognizes and removes damaged bases. Has a preference for oxidized purines, such as 7,8-dihydro-8-oxoguanine (8-oxoG). Has AP (apurinic/apyrimidinic) lyase activity and introduces nicks in the DNA strand. Cleaves the DNA backbone by beta-delta elimination to generate a single-strand break at the site of the removed base with both 3'- and 5'-phosphates. This chain is Formamidopyrimidine-DNA glycosylase, found in Methylorubrum extorquens (strain CM4 / NCIMB 13688) (Methylobacterium extorquens).